A 316-amino-acid chain; its full sequence is tRNA dimethylallyltransferase (316 aa).

Position 19 to 26 (19 to 26 (GPTASGKT)) interacts with ATP. 21–26 (TASGKT) is a substrate binding site. 3 interaction with substrate tRNA regions span residues 44-47 (DSAL), 168-172 (QRITR), and 249-254 (RCVGYR).

Belongs to the IPP transferase family. In terms of assembly, monomer. It depends on Mg(2+) as a cofactor.

The enzyme catalyses adenosine(37) in tRNA + dimethylallyl diphosphate = N(6)-dimethylallyladenosine(37) in tRNA + diphosphate. Its function is as follows. Catalyzes the transfer of a dimethylallyl group onto the adenine at position 37 in tRNAs that read codons beginning with uridine, leading to the formation of N6-(dimethylallyl)adenosine (i(6)A). The sequence is that of tRNA dimethylallyltransferase from Colwellia psychrerythraea (strain 34H / ATCC BAA-681) (Vibrio psychroerythus).